The sequence spans 362 residues: Protein mab-21-like 3 (362 aa).

It belongs to the mab-21 family.

The polypeptide is Protein mab-21-like 3 (MAB21L3) (Homo sapiens (Human)).